The sequence spans 144 residues: 3-dehydroquinate dehydratase (144 aa).

The active-site Proton acceptor is the tyrosine 22. Positions 73, 79, and 86 each coordinate substrate. Residue histidine 99 is the Proton donor of the active site. Residues 100–101 (LS) and arginine 110 each bind substrate.

This sequence belongs to the type-II 3-dehydroquinase family. Homododecamer.

It catalyses the reaction 3-dehydroquinate = 3-dehydroshikimate + H2O. It functions in the pathway metabolic intermediate biosynthesis; chorismate biosynthesis; chorismate from D-erythrose 4-phosphate and phosphoenolpyruvate: step 3/7. In terms of biological role, catalyzes a trans-dehydration via an enolate intermediate. The chain is 3-dehydroquinate dehydratase from Geotalea daltonii (strain DSM 22248 / JCM 15807 / FRC-32) (Geobacter daltonii).